The primary structure comprises 494 residues: Solute carrier family 2, facilitated glucose transporter member 3 (494 aa).

The Cytoplasmic portion of the chain corresponds to 1–10 (MGTTKVTPYL). Residues 11 to 32 (IFATSVAAIGSFQFGYNTGVIN) form a helical membrane-spanning segment. At 33 to 64 (APEMIIRDFLNYTLDEKLDEPPSRLLLTNLWS) the chain is on the extracellular side. N-linked (GlcNAc...) asparagine glycosylation is present at Asn43. A helical transmembrane segment spans residues 65–84 (LSVAIFSVGGMIGSFSVGLF). At 85–89 (NRFGR) the chain is on the cytoplasmic side. The helical transmembrane segment at 90-110 (RNSMLIVNLLAVIGGCLMGFC) threads the bilayer. The Extracellular portion of the chain corresponds to 111–117 (KISESVE). Residues 118 to 141 (MLILGRLVIGVFCGLCTGFVPMYI) traverse the membrane as a helical segment. Residues 142–152 (GEISPTALRGA) lie on the Cytoplasmic side of the membrane. The chain crosses the membrane as a helical span at residues 153-173 (FGTLNQLGIVIGILVAQIFGL). Gln158 contributes to the D-glucose binding site. The Extracellular segment spans residues 174-182 (EIILGSEVL). The helical transmembrane segment at 183–203 (WPVLLGFTIIPAILQSAALPF) threads the bilayer. Over 204–268 (CPESPRFLLI…LFRAPSYRQP (65 aa)) the chain is Cytoplasmic. At Thr231 the chain carries Phosphothreonine. The helical transmembrane segment at 269 to 289 (IIISIVLQLSQQLSGINAVFY) threads the bilayer. Residues 276–278 (QLS) are important for selectivity against fructose. Residues 279–280 (QQ) and Asn285 each bind D-glucose. Over 290–303 (YSTGIFKDAGVKEP) the chain is Extracellular. The chain crosses the membrane as a helical span at residues 304 to 324 (IYATIGAGVVNTIFTIVSVFL). Asn314 lines the D-glucose pocket. The Cytoplasmic portion of the chain corresponds to 325-330 (VERAGR). A helical transmembrane segment spans residues 331–351 (RTLHLIGLGGMALCSVLMTVS). Residues 352–362 (LLLKDKYDTMS) are Extracellular-facing. Residues 363–388 (LVCIAAILIYVAFFEIGPGPIPWFIV) traverse the membrane as a helical segment. 2 residues coordinate D-glucose: Glu377 and Trp385. The Cytoplasmic portion of the chain corresponds to 389 to 398 (AELFSQGPRP). Residues 399 to 419 (AAMAVAGCSNWTSNFLVGLLF) form a helical membrane-spanning segment. Topologically, residues 420–428 (PSAAYYLGA) are extracellular. Residues 429–449 (YVFVIFAVFLVAFFIFTFFKV) form a helical membrane-spanning segment. Residues 450–494 (PETRGRTFEDITRAFEGQAAEANKLGKGPTMEMNSIQPIETTTHV) are Cytoplasmic-facing. Phosphoserine is present on Ser484. Thr491 is modified (phosphothreonine).

It belongs to the major facilitator superfamily. Sugar transporter (TC 2.A.1.1) family. Glucose transporter subfamily. As to quaternary structure, interacts with SMIM43; the interaction may promote SLC2A3-mediated glucose transport to meet the energy needs of mesendoderm differentiation. Detected in stomach, placenta, lung and brain.

It localises to the cell membrane. The protein resides in the perikaryon. It is found in the cell projection. The catalysed reaction is D-glucose(out) = D-glucose(in). It catalyses the reaction D-galactose(in) = D-galactose(out). With respect to regulation, deoxyglucose transport is inhibited by D-glucose, D-galactose and maltose. Galactose transport is inhibited by D-glucose and maltose. Functionally, facilitative glucose transporter. Can also mediate the uptake of various other monosaccharides across the cell membrane. Mediates the uptake of glucose, 2-deoxyglucose, galactose, mannose, xylose and fucose, and probably also dehydroascorbate. Does not mediate fructose transport. Required for mesendoderm differentiation. In Oryctolagus cuniculus (Rabbit), this protein is Solute carrier family 2, facilitated glucose transporter member 3.